Reading from the N-terminus, the 854-residue chain is SH2 domain-containing protein 3C (854 aa).

Ser22 carries the post-translational modification Phosphoserine. The segment covering 34–43 has biased composition (low complexity); that stretch reads RSSASASIRS. Positions 34 to 129 are disordered; sequence RSSASASIRS…AKEAGEGTEA (96 aa). Residues 99–124 are compositionally biased toward basic and acidic residues; it reads EVSRESHLVSRRLPEPPDLEAAKEAG. The 100-residue stretch at 215 to 314 folds into the SH2 domain; the sequence is WYHGRIPREV…QSGAIIYCPV (100 aa). Tyr273 and Tyr278 each carry phosphotyrosine. Disordered regions lie at residues 330–384, 398–417, and 422–520; these read SQGS…PRDS, LHSP…YSTV, and APSA…ERQK. Residues 333 to 347 are compositionally biased toward low complexity; the sequence is SSKTASPASPSGSKG. Phosphoserine is present on Ser354. 3 stretches are compositionally biased toward low complexity: residues 400-415, 422-436, and 474-485; these read SPLS…PAYS, APSA…PASP, and SPSPSLSSYSDP. Position 435 is a phosphoserine (Ser435). Basic and acidic residues predominate over residues 508-520; sequence TPRKARGSGERQK. Residues 580–848 form the Ras-GEF domain; that stretch reads DARTLARHVT…TALSHKLEPA (269 aa). Residue Tyr787 is modified to Phosphotyrosine.

As to quaternary structure, component of a complex comprised of SH2D3C, BCAR1/CAS, and CRK. Within the complex, interacts with CRK and (via C-terminus) with BCAR1/CAS (via C-terminus). Interacts with NEDD9/HEF1. Interacts with EPHB2. In terms of assembly, interacts with NEDD9/HEF1. Interacts with BCAR1/CAS. Interacts with PTK2B. Interacts (via C-terminus) with BCAR1/CAS (via C-terminus). Interacts with IGF1. Post-translationally, phosphorylated by MAPK/ERK upon T-cell receptor stimulation in T-cells. As to expression, expressed in the olfactory bulb and olfactory sensory neurons (at protein level). Expressed in B cells (at protein level). Expressed in T lymphocytes. In terms of tissue distribution, expressed in hematopoietic cells from spleen, lymph node and thymus (at protein level). Expressed weakly in the lung (at protein level). Expressed in the brain, lung, kidney, and weakly expressed in the liver and lung (at protein level).

It is found in the cytoplasm. It localises to the cell membrane. The protein resides in the cell projection. Its subcellular location is the axon. The protein localises to the ruffle membrane. In terms of biological role, acts as an adapter protein that mediates cell signaling pathways involved in cellular functions such as cell adhesion and migration, tissue organization, and the regulation of the immune response. Plays a role in integrin-mediated cell adhesion through BCAR1-CRK-RAPGEF1 signaling and activation of the small GTPase RAP1. Promotes cell migration and invasion through the extracellular matrix. Required for marginal zone B-cell development and thymus-independent type 2 immune responses. Mediates migration and adhesion of B cells in the splenic marginal zone via promoting hyperphosphorylation of NEDD9/CASL. Plays a role in CXCL13-induced chemotaxis of B-cells. Plays a role in the migration of olfactory sensory neurons (OSNs) into the forebrain and the innervation of the olfactory bulb by the OSN axons during development. Required for the efficient tyrosine phosphorylation of BCAR1 in OSN axons. Important regulator of chemokine-induced, integrin-mediated T lymphocyte adhesion and migration, acting upstream of RAP1. Required for tissue-specific adhesion of T lymphocytes to peripheral tissues. Required for basal and CXCL2 stimulated serine-threonine phosphorylation of NEDD9. May be involved in the regulation of T-cell receptor-mediated IL2 production through the activation of the JNK pathway in T-cells. Functionally, may be involved in the BCAR1/CAS-mediated JNK activation pathway. The polypeptide is SH2 domain-containing protein 3C (Sh2d3c) (Mus musculus (Mouse)).